Consider the following 402-residue polypeptide: Thyroid hormone receptor alpha (402 aa).

The segment at 1 to 22 is disordered; the sequence is MEQKPSTLDPLSEPEDTRWLDG. Residues 1 to 50 form a modulating region; it reads MEQKPSTLDPLSEPEDTRWLDGKRKRKSSQCLVKSSMSGYIPSYLDKDEQ. Position 12 is a phosphoserine; by CK2 (Ser-12). Ser-28 bears the Phosphoserine mark. The Zn(2+) site is built by Cys-51, Cys-54, Cys-68, Cys-71, Cys-89, Cys-95, Cys-105, and Cys-108. 2 consecutive NR C4-type zinc fingers follow at residues 51–71 and 89–113; these read CVVC…CEGC and CKYD…FKKC. Residues 51–125 constitute a DNA-binding region (nuclear receptor); sequence CVVCGDKATG…VGMAMDLVLD (75 aa). An NR LBD domain is found at 161–402; it reads EEWELIHVVT…ELFPPLFLEV (242 aa). Arg-226 and Ser-275 together coordinate 3,3',5-triiodo-L-thyronine.

It belongs to the nuclear hormone receptor family. NR1 subfamily. As to quaternary structure, probably interacts with SFPQ.

It is found in the nucleus. Nuclear hormone receptor that can act as a repressor or activator of transcription. High affinity receptor for thyroid hormones, including triiodothyronine and thyroxine. This chain is Thyroid hormone receptor alpha (THRA), found in Aptenodytes patagonicus (King penguin).